A 99-amino-acid polypeptide reads, in one-letter code: Large ribosomal subunit protein uL23 (99 aa).

Belongs to the universal ribosomal protein uL23 family. In terms of assembly, part of the 50S ribosomal subunit. Contacts protein L29, and trigger factor when it is bound to the ribosome.

In terms of biological role, one of the early assembly proteins it binds 23S rRNA. One of the proteins that surrounds the polypeptide exit tunnel on the outside of the ribosome. Forms the main docking site for trigger factor binding to the ribosome. The polypeptide is Large ribosomal subunit protein uL23 (Blochmanniella floridana).